Here is an 833-residue protein sequence, read N- to C-terminus: Leucine--tRNA ligase (833 aa).

A 'HIGH' region motif is present at residues 41 to 52 (PYPSGAGLHVGH). The short motif at 610 to 614 (KMSKS) is the 'KMSKS' region element. Residue Lys-613 participates in ATP binding.

The protein belongs to the class-I aminoacyl-tRNA synthetase family.

It is found in the cytoplasm. The catalysed reaction is tRNA(Leu) + L-leucine + ATP = L-leucyl-tRNA(Leu) + AMP + diphosphate. The sequence is that of Leucine--tRNA ligase from Streptococcus pneumoniae serotype 19F (strain G54).